A 52-amino-acid polypeptide reads, in one-letter code: Repressor-like protein SSo7c3 (52 aa).

The region spanning E4–S51 is the SpoVT-AbrB domain.

The sequence is that of Repressor-like protein SSo7c3 from Saccharolobus solfataricus (strain ATCC 35092 / DSM 1617 / JCM 11322 / P2) (Sulfolobus solfataricus).